Reading from the N-terminus, the 130-residue chain is Small ribosomal subunit protein uS8 (130 aa).

Belongs to the universal ribosomal protein uS8 family. Part of the 30S ribosomal subunit.

One of the primary rRNA binding proteins, it binds directly to 16S rRNA central domain where it helps coordinate assembly of the platform of the 30S subunit. This is Small ribosomal subunit protein uS8 from Methanosarcina barkeri (strain Fusaro / DSM 804).